The chain runs to 398 residues: ATP-dependent RNA helicase eIF4A (398 aa).

Positions 25 to 53 (DSFDSMDLKPELLRGVYAYGFERPSAIQQ) match the Q motif motif. The Helicase ATP-binding domain occupies 56-226 (IKPIIAGHDV…TKFMRDPIRI (171 aa)). 69–76 (AQSGTGKT) is an ATP binding site. Residues 174–177 (DEAD) carry the DEAD box motif. The region spanning 237–398 (GIKQFYIAVE…EMPMNVADLI (162 aa)) is the Helicase C-terminal domain.

This sequence belongs to the DEAD box helicase family. eIF4A subfamily. In terms of assembly, component of the eIF4F complex, which composition varies with external and internal environmental conditions. It is composed of at least eIF4A, eIF4E and eIF4G.

The protein localises to the cytoplasm. The enzyme catalyses ATP + H2O = ADP + phosphate + H(+). In terms of biological role, ATP-dependent RNA helicase which is a subunit of the eIF4F complex involved in cap recognition and is required for mRNA binding to ribosome. In the current model of translation initiation, eIF4A unwinds RNA secondary structures in the 5'-UTR of mRNAs which is necessary to allow efficient binding of the small ribosomal subunit, and subsequent scanning for the initiator codon. This is ATP-dependent RNA helicase eIF4A (tif1) from Aspergillus niger (strain ATCC MYA-4892 / CBS 513.88 / FGSC A1513).